A 195-amino-acid polypeptide reads, in one-letter code: Probable GTP-binding protein EngB (195 aa).

The EngB-type G domain maps to 24–195; sequence GLKEVALAGR…MIFNAIEKYL (172 aa). Residues 32 to 39, 59 to 63, 77 to 80, 144 to 147, and 176 to 178 each bind GTP; these read GRSNVGKS, GKTQT, DVPG, TKED, and YTA. Residues Ser39 and Thr61 each contribute to the Mg(2+) site.

It belongs to the TRAFAC class TrmE-Era-EngA-EngB-Septin-like GTPase superfamily. EngB GTPase family. Mg(2+) serves as cofactor.

Necessary for normal cell division and for the maintenance of normal septation. In Macrococcus caseolyticus (strain JCSC5402) (Macrococcoides caseolyticum), this protein is Probable GTP-binding protein EngB.